Reading from the N-terminus, the 239-residue chain is uncharacterized protein (239 aa).

It belongs to the initiator RepB protein family.

Mutations in ORF 239 affects the incN plasmid pUC1 E.coli polA-independence but not its autonomous replication ability. This is an uncharacterized protein from Escherichia coli.